The following is a 1137-amino-acid chain: Dendrite extension defective protein 1 (1137 aa).

The first 41 residues, 1–41, serve as a signal peptide directing secretion; that stretch reads MLAHTHRINKCLYGQNQMRNRHALLGALPPIFLLLLPLISC. Topologically, residues 43-1005 are extracellular; the sequence is KFDPERIAAR…HAEEQSPRLA (963 aa). An NIDO 1 domain is found at 163–302; it reads PFWNRNDLRN…GEWMFELSEL (140 aa). N240 and N416 each carry an N-linked (GlcNAc...) asparagine glycan. Residues 409–450 form the EGF-like; calcium-binding domain; it reads DVDECKTNSTICHKNAICTNTPGRYFCMCKEGFSGDGQNDCS. 3 cysteine pairs are disulfide-bonded: C413–C426, C420–C435, and C437–C449. An NIDO 2 domain is found at 519–659; it reads PFFGPIDLSR…GTWLYRIDKA (141 aa). N571 carries an N-linked (GlcNAc...) asparagine glycan. A compositionally biased stretch (polar residues) spans 738 to 749; that stretch reads IGNQQRQQTTKA. Disordered regions lie at residues 738–765, 795–856, 878–897, 906–933, and 978–998; these read IGNQ…HRPI, FRPN…PFEA, QTTK…EDLS, TEED…TKAH, and NSQP…GHAE. A glycan (N-linked (GlcNAc...) asparagine) is linked at N756. Polar residues predominate over residues 798–809; sequence NQRNGVQKSTQR. Over residues 819 to 833 the composition is skewed to basic and acidic residues; that stretch reads PLKEEATTSVPREKT. Residues 906–915 show a composition bias toward acidic residues; that stretch reads TEEDEEEAEI. The segment covering 916-933 has biased composition (low complexity); the sequence is STETTTEMSSTTTTTKAH. Positions 978 to 992 are enriched in polar residues; sequence NSQPPKQRNDNQPTV. Residues 1006–1026 form a helical membrane-spanning segment; it reads ILLPVMIILAWLVILVCIGAV. The Cytoplasmic segment spans residues 1027–1037; it reads VCCKRRNSRES. Residues 1106–1125 are disordered; it reads ARLSTQERQSPPSFVNNGYT.

Post-translationally, may be proteolytically cleaved and secreted.

Its subcellular location is the membrane. It localises to the cell projection. It is found in the dendrite. The protein localises to the secreted. Its function is as follows. Along with dyf-7, enables neurite growth and maintenance by anchoring amphid dendritic tips during neuron cell body migration in embryonic and larval development. Promotes seam cell remodeling during the dauer phase. Plays a role in positively regulating locomotion during the dauer phase. This chain is Dendrite extension defective protein 1, found in Caenorhabditis elegans.